The primary structure comprises 72 residues: Translation initiation factor IF-1 (72 aa).

The S1-like domain maps to 1–72 (MAKEDAIELQ…SKGRIVFRAR (72 aa)).

It belongs to the IF-1 family. In terms of assembly, component of the 30S ribosomal translation pre-initiation complex which assembles on the 30S ribosome in the order IF-2 and IF-3, IF-1 and N-formylmethionyl-tRNA(fMet); mRNA recruitment can occur at any time during PIC assembly.

The protein localises to the cytoplasm. Its function is as follows. One of the essential components for the initiation of protein synthesis. Stabilizes the binding of IF-2 and IF-3 on the 30S subunit to which N-formylmethionyl-tRNA(fMet) subsequently binds. Helps modulate mRNA selection, yielding the 30S pre-initiation complex (PIC). Upon addition of the 50S ribosomal subunit IF-1, IF-2 and IF-3 are released leaving the mature 70S translation initiation complex. The chain is Translation initiation factor IF-1 from Aliivibrio fischeri (strain ATCC 700601 / ES114) (Vibrio fischeri).